The primary structure comprises 148 residues: Receptor activity-modifying protein 1 (148 aa).

Residues 1-26 (MVRVLRGLPWRGLWLLLAHQLFLVTA) form the signal peptide. Disulfide bonds link Cys27-Cys82, Cys40-Cys72, and Cys57-Cys104. Topologically, residues 27–118 (CQDAHYGTLM…RALGDPPSTI (92 aa)) are extracellular. The helical transmembrane segment at 119–140 (LCPFVVLPITVTLLVTALVVWR) threads the bilayer. Topologically, residues 141–148 (SKRAESIV) are cytoplasmic.

The protein belongs to the RAMP family. In terms of assembly, heterodimer of CALCRL and RAMP1; the interaction induces allosteric modulation of CALCRL function and CGRP1/CALCA and CGRP2/CALCB ligand specificity. Heterodimer of CALCR and RAMP1; interaction forms the AMYR1 receptor complex for amylin/IAPP and CGRP1/CALCA ligands.

Its subcellular location is the cell membrane. Its function is as follows. Accessory protein that interacts with and modulates the function of G-protein coupled receptors including calcitonin gene-related peptide type 1 receptor (CALCRL) and calcitonin receptor (CALCR). Required for the transport of CALCRL to the plasma membrane. Together with CALCRL, form the receptor complex for the calcitonin gene-related peptides CGRP1/CALCA and CGRP2/CALCB. Together with CALCR, form the AMYR1 receptor complex for amylin/IAPP and CGRP1/CALCA. The polypeptide is Receptor activity-modifying protein 1 (RAMP1) (Cavia porcellus (Guinea pig)).